The chain runs to 392 residues: MSLTKKIKNEKSLKQEKQTDQLKSNLRNNNNNINNKSKPKDQNLNTLHYIKTHLKEELFFIFCVGGIYIFYLLYGLVQEQLNVTKFGTEKKVFGFTAFLLALQCFFNMVSAWLVSLVNKEQKDNTPFMKYGFVSMLLVISTFLSNQSIRYISYPTQVLAKSCKPIPVIFMGLLLFKKKYPFLKYIVVIVISLGISLFMLPKATSKKNIQFEGHDHLFGNFILFVSLMMDGVMGPFQDNLVRQYKPSATSMMLNTNIWNLGLFSIMAFARGEVSQAIDFILEYPEVIKLILAFCITSAIGQQFIFLTTNKFGSLNCSTITTTRKFFSILVSIFYFGHSLDNLQWAAICMVFGGLILDLYISYSNKKKGVVLSPIAAPVKHPTATTPLENKKSL.

The segment at 1–40 is disordered; the sequence is MSLTKKIKNEKSLKQEKQTDQLKSNLRNNNNNINNKSKPK. Over residues 7–20 the composition is skewed to basic and acidic residues; the sequence is IKNEKSLKQEKQTD. The segment covering 25–35 has biased composition (low complexity); sequence NLRNNNNNINN. The next 9 membrane-spanning stretches (helical) occupy residues 57–77, 97–117, 124–144, 155–175, 179–199, 215–235, 247–267, 285–305, and 341–361; these read ELFF…YGLV, AFLL…VSLV, NTPF…TFLS, TQVL…LLLF, YPFL…LFML, HLFG…MGPF, ATSM…IMAF, VIKL…FIFL, and LQWA…YISY. Residues 389-392 carry the Di-lysine motif motif; the sequence is KKSL.

Belongs to the nucleotide-sugar transporter family. SLC35B subfamily.

Its subcellular location is the endoplasmic reticulum membrane. In terms of biological role, probable sugar transporter. This Dictyostelium discoideum (Social amoeba) protein is Solute carrier family 35 member B1 (slc35b1).